The chain runs to 114 residues: Putative toxin HigB3 (114 aa).

Belongs to the mycobacterial HigB family.

Functionally, putative toxic component of a type II toxin-antitoxin (TA) system. Its cognate antitoxin would be HigA3. Not toxic upon expression in M.smegmatis. This Mycobacterium tuberculosis (strain ATCC 25618 / H37Rv) protein is Putative toxin HigB3.